The chain runs to 169 residues: Methane monooxygenase component A gamma chain (169 aa).

In terms of assembly, m.trichosporium has two forms of methane monooxygenase, a soluble and a membrane-bound type. The soluble type consists of four components (A to D): protein A, comprising three chains, in an alpha-2, beta-2, gamma-2 configuration, is a nonheme iron protein containing an unusual mu-hydroxo bridge structure at its active site and interacts with both oxygen and methane.

The enzyme catalyses methane + NADH + O2 + H(+) = methanol + NAD(+) + H2O. The catalysed reaction is methane + NADPH + O2 + H(+) = methanol + NADP(+) + H2O. Functionally, responsible for the initial oxygenation of methane to methanol in methanotrophs. It also catalyzes the monohydroxylation of a variety of unactivated alkenes, alicyclic, aromatic and heterocyclic compounds. The chain is Methane monooxygenase component A gamma chain (mmoZ) from Methylosinus trichosporium.